The following is a 283-amino-acid chain: Protein/nucleic acid deglycase HchA (283 aa).

Zn(2+) contacts are provided by H86, E91, and H123. Residue C185 is the Nucleophile of the active site.

Belongs to the peptidase C56 family. HchA subfamily. Homodimer.

It is found in the cytoplasm. It catalyses the reaction N(omega)-(1-hydroxy-2-oxopropyl)-L-arginyl-[protein] + H2O = lactate + L-arginyl-[protein] + H(+). It carries out the reaction N(6)-(1-hydroxy-2-oxopropyl)-L-lysyl-[protein] + H2O = lactate + L-lysyl-[protein] + H(+). The enzyme catalyses S-(1-hydroxy-2-oxopropyl)-L-cysteinyl-[protein] + H2O = lactate + L-cysteinyl-[protein] + H(+). The catalysed reaction is N(omega)-(1-hydroxy-2-oxoethyl)-L-arginyl-[protein] + H2O = L-arginyl-[protein] + glycolate + H(+). It catalyses the reaction N(6)-(1-hydroxy-2-oxoethyl)-L-lysyl-[protein] + H2O = glycolate + L-lysyl-[protein] + H(+). It carries out the reaction S-(1-hydroxy-2-oxoethyl)-L-cysteinyl-[protein] + H2O = glycolate + L-cysteinyl-[protein] + H(+). The enzyme catalyses N(2)-(1-hydroxy-2-oxopropyl)-dGTP + H2O = lactate + dGTP + H(+). The catalysed reaction is N(2)-(1-hydroxy-2-oxopropyl)-GTP + H2O = lactate + GTP + H(+). It catalyses the reaction N(2)-(1-hydroxy-2-oxopropyl)-GDP + H2O = lactate + GDP + H(+). It carries out the reaction N(2)-(1-hydroxy-2-oxopropyl)-GMP + H2O = lactate + GMP + H(+). The enzyme catalyses N(2)-(1-hydroxy-2-oxoethyl)-dGTP + H2O = dGTP + glycolate + H(+). The catalysed reaction is N(2)-(1-hydroxy-2-oxoethyl)-GTP + H2O = glycolate + GTP + H(+). It catalyses the reaction N(2)-(1-hydroxy-2-oxoethyl)-GDP + H2O = glycolate + GDP + H(+). It carries out the reaction N(2)-(1-hydroxy-2-oxoethyl)-GMP + H2O = glycolate + GMP + H(+). The enzyme catalyses an N(2)-(1-hydroxy-2-oxopropyl)-guanosine in RNA + H2O = a guanosine in RNA + lactate + H(+). The catalysed reaction is an N(2)-(1-hydroxy-2-oxopropyl)-2'-deoxyguanosine in DNA + H2O = a 2'-deoxyguanosine in DNA + lactate + H(+). It catalyses the reaction an N(2)-(1-hydroxy-2-oxoethyl)-guanosine in RNA + H2O = a guanosine in RNA + glycolate + H(+). It carries out the reaction an N(2)-(1-hydroxy-2-oxoethyl)-2'-deoxyguanosine in DNA + H2O = a 2'-deoxyguanosine in DNA + glycolate + H(+). In terms of biological role, protein and nucleotide deglycase that catalyzes the deglycation of the Maillard adducts formed between amino groups of proteins or nucleotides and reactive carbonyl groups of glyoxals. Thus, functions as a protein deglycase that repairs methylglyoxal- and glyoxal-glycated proteins, and releases repaired proteins and lactate or glycolate, respectively. Deglycates cysteine, arginine and lysine residues in proteins, and thus reactivates these proteins by reversing glycation by glyoxals. Acts on early glycation intermediates (hemithioacetals and aminocarbinols), preventing the formation of Schiff bases and advanced glycation endproducts (AGE). Also functions as a nucleotide deglycase able to repair glycated guanine in the free nucleotide pool (GTP, GDP, GMP, dGTP) and in DNA and RNA. Is thus involved in a major nucleotide repair system named guanine glycation repair (GG repair), dedicated to reversing methylglyoxal and glyoxal damage via nucleotide sanitization and direct nucleic acid repair. Plays an important role in protecting cells from carbonyl stress. This is Protein/nucleic acid deglycase HchA from Escherichia coli O8 (strain IAI1).